Reading from the N-terminus, the 455-residue chain is GTPase Der (455 aa).

EngA-type G domains lie at 4 to 169 (PVVA…PPKD) and 178 to 353 (IQMA…EQHR). GTP contacts are provided by residues 10–17 (GRPNVGKS), 57–61 (DTGGL), 120–123 (NKCE), 184–191 (GRPNVGKS), 231–235 (DTAGI), and 296–299 (NKWD). A KH-like domain is found at 354–439 (RRVSTSVVNE…PVKLYWRGKQ (86 aa)).

It belongs to the TRAFAC class TrmE-Era-EngA-EngB-Septin-like GTPase superfamily. EngA (Der) GTPase family. In terms of assembly, associates with the 50S ribosomal subunit.

GTPase that plays an essential role in the late steps of ribosome biogenesis. The chain is GTPase Der from Parasynechococcus marenigrum (strain WH8102).